Consider the following 79-residue polypeptide: Small ribosomal subunit protein bS16c (79 aa).

The protein belongs to the bacterial ribosomal protein bS16 family.

It localises to the plastid. The protein localises to the chloroplast. In Thalassiosira pseudonana (Marine diatom), this protein is Small ribosomal subunit protein bS16c.